Reading from the N-terminus, the 67-residue chain is DNA-directed RNA polymerase subunit omega (67 aa).

The protein belongs to the RNA polymerase subunit omega family. In terms of assembly, the RNAP catalytic core consists of 2 alpha, 1 beta, 1 beta' and 1 omega subunit. When a sigma factor is associated with the core the holoenzyme is formed, which can initiate transcription.

The catalysed reaction is RNA(n) + a ribonucleoside 5'-triphosphate = RNA(n+1) + diphosphate. Its function is as follows. Promotes RNA polymerase assembly. Latches the N- and C-terminal regions of the beta' subunit thereby facilitating its interaction with the beta and alpha subunits. The sequence is that of DNA-directed RNA polymerase subunit omega from Delftia acidovorans (strain DSM 14801 / SPH-1).